We begin with the raw amino-acid sequence, 828 residues long: G-type lectin S-receptor-like serine/threonine-protein kinase At2g19130 (828 aa).

Positions 1–22 are cleaved as a signal peptide; the sequence is MVSFLTLTSFFFICFFIHGSSA. A Bulb-type lectin domain is found at 23-146; the sequence is VDTISGDFTL…GSSLSANVLW (124 aa). Residues 23 to 439 are Extracellular-facing; the sequence is VDTISGDFTL…GASGKSNNKG (417 aa). Asparagine 85, asparagine 113, asparagine 203, asparagine 234, asparagine 240, and asparagine 255 each carry an N-linked (GlcNAc...) asparagine glycan. The EGF-like domain maps to 286 to 322; sequence PRQQCQVYRYCGSFGICSDKSEPFCRCPQGFRPMSQK. 4 disulfides stabilise this stretch: cysteine 290-cysteine 302, cysteine 296-cysteine 310, cysteine 372-cysteine 394, and cysteine 376-cysteine 382. The PAN domain maps to 341–422; it reads CSRGDINQFF…EGNIFYLRLA (82 aa). A helical transmembrane segment spans residues 440 to 460; the sequence is LIFGAVLGSLGVIVLVLLVVI. The Cytoplasmic segment spans residues 461–828; sequence LILRYRRRKR…KKMTNDNSSA (368 aa). In terms of domain architecture, Protein kinase spans 493–770; that stretch reads KNFSDKLGGG…QVVQILEGVL (278 aa). Residues 499–507 and lysine 521 contribute to the ATP site; that span reads LGGGGFGSV. Serine 527 carries the post-translational modification Phosphoserine. The interval 582-600 is caM-binding; that stretch reads VEEKIVLGWKLRFQIALGT. Aspartate 619 (proton acceptor) is an active-site residue. Threonine 653 is subject to Phosphothreonine. Positions 796–828 are disordered; the sequence is ESSSSSSHNSSQNHKHSSSSSSSKKMTNDNSSA. The span at 797-828 shows a compositional bias: low complexity; the sequence is SSSSSSHNSSQNHKHSSSSSSSKKMTNDNSSA. Serine 815 bears the Phosphoserine mark.

This sequence belongs to the protein kinase superfamily. Ser/Thr protein kinase family.

It localises to the cell membrane. The catalysed reaction is L-seryl-[protein] + ATP = O-phospho-L-seryl-[protein] + ADP + H(+). It catalyses the reaction L-threonyl-[protein] + ATP = O-phospho-L-threonyl-[protein] + ADP + H(+). The polypeptide is G-type lectin S-receptor-like serine/threonine-protein kinase At2g19130 (Arabidopsis thaliana (Mouse-ear cress)).